Consider the following 826-residue polypeptide: Beta-galactosidase 7 (826 aa).

Residues M1–S25 form the signal peptide. N-linked (GlcNAc...) asparagine glycosylation is present at N154. E184 (proton donor) is an active-site residue. Catalysis depends on E253, which acts as the Nucleophile. N-linked (GlcNAc...) asparagine glycosylation is found at N254, N351, N380, N491, N665, N706, N797, and N801. In terms of domain architecture, SUEL-type lectin spans A740–C826.

It belongs to the glycosyl hydrolase 35 family. In terms of tissue distribution, expressed in flowers.

It localises to the secreted. The protein resides in the extracellular space. It is found in the apoplast. The enzyme catalyses Hydrolysis of terminal non-reducing beta-D-galactose residues in beta-D-galactosides.. The polypeptide is Beta-galactosidase 7 (BGAL7) (Arabidopsis thaliana (Mouse-ear cress)).